Consider the following 280-residue polypeptide: HCLS1-associated protein X-1 (280 aa).

N-acetylserine is present on Ser2. The tract at residues 2–45 (SVFDLFRGFFGFPGPRSHRDPFFGGMTRDDDDDDDDDDEAEEDR) is required for localization in mitochondria. Disordered regions lie at residues 12 to 70 (GFPG…SFSP) and 100 to 263 (TLPS…SALD). The segment covering 30 to 43 (DDDDDDDDDDEAEE) has biased composition (acidic residues). The involved in HCLS1 binding stretch occupies residues 115 to 280 (TPGERLREGQ…LLLGRWFRSR (166 aa)). 2 stretches are compositionally biased toward basic and acidic residues: residues 116 to 125 (PGERLREGQT) and 134 to 154 (PDSH…KPES). The involved in CASP9 binding stretch occupies residues 176–207 (VSPHSRAKEDKDLDSQVSQEGLGPLLQPQPKS). Residues 177-248 (SPHSRAKEDK…TTVTHQEAHD (72 aa)) form an involved in GNA13 binding region. A required for localization in sarcoplasmic reticulum region spans residues 184–280 (EDKDLDSQVS…LLLGRWFRSR (97 aa)). The interval 185 to 280 (DKDLDSQVSQ…LLLGRWFRSR (96 aa)) is involved in PKD2 binding. 2 positions are modified to phosphoserine: Ser190 and Ser193. Residues 204-226 (QPKSYFKSISVTKITKPDGTVEE) form an involved in PLN binding region. The segment at 204–246 (QPKSYFKSISVTKITKPDGTVEERRTVVDSEGRRETTVTHQEA) is involved in ATP2A2 binding. The segment at 211 to 280 (SISVTKITKP…LLLGRWFRSR (70 aa)) is mediates interaction with UCP3. The span at 218–256 (TKPDGTVEERRTVVDSEGRRETTVTHQEAHDSSRSDPDS) shows a compositional bias: basic and acidic residues. The required for ITGB6 binding stretch occupies residues 271-280 (LLLGRWFRSR).

It belongs to the HAX1 family. As to quaternary structure, interacts with ABCB1, ABCB4 and ABCB11. Directly associates with HCLS1/HS1, through binding to its N-terminal region. Interacts with CTTN. Interacts with PKD2. Interacts with GNA13. Interacts with CASP9. Interacts with ITGB6. Interacts with PLN and ATP2A2; these interactions are inhibited by calcium. Interacts with GRB7. Interacts (via C-terminus) with XIAP/BIRC4 (via BIR 2 domain and BIR 3 domain) and this interaction blocks ubiquitination of XIAP/BIRC4. Interacts with TPC2. Interacts with KCNC3. Interacts with XPO1. Interacts with RNF217. Interacts with UCP3; the interaction is direct and calcium-dependent. Interacts with MAPRE2; this interaction regulates cell migration in keratinocytes. As to expression, ubiquitous, with highest levels in kidney and liver (at protein level).

It localises to the mitochondrion matrix. It is found in the endoplasmic reticulum. Its subcellular location is the nucleus membrane. The protein localises to the cytoplasmic vesicle. The protein resides in the cytoplasm. It localises to the cell cortex. It is found in the cell membrane. Its subcellular location is the sarcoplasmic reticulum. The protein localises to the P-body. The protein resides in the nucleus. In terms of biological role, recruits the Arp2/3 complex to the cell cortex and regulates reorganization of the cortical actin cytoskeleton via its interaction with KCNC3 and the Arp2/3 complex. Slows down the rate of inactivation of KCNC3 channels. Promotes GNA13-mediated cell migration. Involved in the clathrin-mediated endocytosis pathway. May be involved in internalization of ABC transporters such as ABCB11. May inhibit CASP9 and CASP3. Promotes cell survival. May regulate intracellular calcium pools. The polypeptide is HCLS1-associated protein X-1 (Hax1) (Mus musculus (Mouse)).